The following is a 275-amino-acid chain: NAD kinase (275 aa).

Aspartate 66 functions as the Proton acceptor in the catalytic mechanism. NAD(+) is bound by residues 66-67 (DG), histidine 71, 135-136 (NE), lysine 146, arginine 163, aspartate 165, and 176-181 (TAYAMS).

The protein belongs to the NAD kinase family. A divalent metal cation is required as a cofactor.

The protein resides in the cytoplasm. It carries out the reaction NAD(+) + ATP = ADP + NADP(+) + H(+). Involved in the regulation of the intracellular balance of NAD and NADP, and is a key enzyme in the biosynthesis of NADP. Catalyzes specifically the phosphorylation on 2'-hydroxyl of the adenosine moiety of NAD to yield NADP. This chain is NAD kinase, found in Methanosphaera stadtmanae (strain ATCC 43021 / DSM 3091 / JCM 11832 / MCB-3).